Here is a 943-residue protein sequence, read N- to C-terminus: Nuclear receptor coactivator 7 (943 aa).

Residue M1 is modified to N-acetylmethionine. Positions 1 to 15 (MDTKEEKKEQKERKQ) are enriched in basic and acidic residues. The stretch at 1-32 (MDTKEEKKEQKERKQSYFARLKKKKQAKQNAE) forms a coiled coil. Positions 1-83 (MDTKEEKKEQ…RKSNQLKEIR (83 aa)) are disordered. Phosphoserine is present on S92. The 44-residue stretch at 117–160 (MEYTAGSQDTLNSVALKFNVTPNKLVELNKLFTHTIVPGQVLFV) folds into the LysM domain. T137 is modified (phosphothreonine). The interval 169–189 (TIQLSSSTPGATVSPSSSDAE) is disordered. Residues 177–187 (PGATVSPSSSD) show a composition bias toward polar residues. A phosphoserine mark is found at S182, S186, S211, S212, and S214. The tract at residues 334-369 (EKRQQNGERTLALDAKSVRSPEESTERTCTRIEPPD) is disordered. A compositionally biased stretch (basic and acidic residues) spans 349–369 (KSVRSPEESTERTCTRIEPPD). Phosphoserine is present on residues S442, S498, and S500. Residues 486–499 (EKQDEAPEVDKHSG) are compositionally biased toward basic and acidic residues. 2 disordered regions span residues 486 to 507 (EKQD…LGES) and 543 to 576 (LSDR…NKEP). The 162-residue stretch at 782–943 (ALLENMHIEQ…VQDLEVWTFE (162 aa)) folds into the TLDc domain.

It belongs to the OXR1 family. As to quaternary structure, interacts with ESR1, ESR2A, ESR2B, THRB, PPARG and RARA in a ligand-inducible manner. Interacts with the heterodimer AHR-ARNT. Highly expressed in brain and kidney. Weakly expressed in mammary gland, lung and testis. In brain, expression is found in neurons of cerebral cortex, thalamus, hypothalamus, hippocampus, cerebellum, striatum and choroid plexus.

The protein resides in the nucleus. Its function is as follows. Enhances the transcriptional activities of several nuclear receptors. Involved in the coactivation of different nuclear receptors, such as ESR1, THRB, PPARG and RARA. The polypeptide is Nuclear receptor coactivator 7 (Ncoa7) (Mus musculus (Mouse)).